The chain runs to 228 residues: Deoxyribose-phosphate aldolase (228 aa).

Asp-96 functions as the Proton donor/acceptor in the catalytic mechanism. Lys-157 acts as the Schiff-base intermediate with acetaldehyde in catalysis. The active-site Proton donor/acceptor is the Lys-185.

The protein belongs to the DeoC/FbaB aldolase family. DeoC type 1 subfamily.

Its subcellular location is the cytoplasm. The catalysed reaction is 2-deoxy-D-ribose 5-phosphate = D-glyceraldehyde 3-phosphate + acetaldehyde. It functions in the pathway carbohydrate degradation; 2-deoxy-D-ribose 1-phosphate degradation; D-glyceraldehyde 3-phosphate and acetaldehyde from 2-deoxy-alpha-D-ribose 1-phosphate: step 2/2. Functionally, catalyzes a reversible aldol reaction between acetaldehyde and D-glyceraldehyde 3-phosphate to generate 2-deoxy-D-ribose 5-phosphate. The polypeptide is Deoxyribose-phosphate aldolase (Picosynechococcus sp. (strain ATCC 27264 / PCC 7002 / PR-6) (Agmenellum quadruplicatum)).